The chain runs to 274 residues: NH(3)-dependent NAD(+) synthetase (274 aa).

ATP is bound at residue 46 to 53; the sequence is GISGGQDS. Aspartate 52 is a Mg(2+) binding site. Arginine 140 is a binding site for deamido-NAD(+). Threonine 160 is an ATP binding site. Residue glutamate 165 participates in Mg(2+) binding. Deamido-NAD(+) is bound by residues lysine 173 and aspartate 180. ATP is bound by residues lysine 189 and threonine 211. 260-261 provides a ligand contact to deamido-NAD(+); it reads HK.

Belongs to the NAD synthetase family. As to quaternary structure, homodimer.

The catalysed reaction is deamido-NAD(+) + NH4(+) + ATP = AMP + diphosphate + NAD(+) + H(+). It participates in cofactor biosynthesis; NAD(+) biosynthesis; NAD(+) from deamido-NAD(+) (ammonia route): step 1/1. Functionally, catalyzes the ATP-dependent amidation of deamido-NAD to form NAD. Uses ammonia as a nitrogen source. This is NH(3)-dependent NAD(+) synthetase from Streptococcus pneumoniae (strain 70585).